The sequence spans 196 residues: Regulator of G-protein signaling 1 (196 aa).

The interval Met1–Lys27 is disordered. Residues Lys11–Thr25 show a composition bias toward basic and acidic residues. The RGS domain occupies Ser72 to Leu187.

Interacts with GNAI1 and GNAQ.

Its subcellular location is the cell membrane. The protein resides in the cytoplasm. The protein localises to the cytosol. Regulates G protein-coupled receptor signaling cascades, including signaling downstream of the N-formylpeptide chemoattractant receptors and leukotriene receptors. Inhibits B cell chemotaxis toward CXCL12. Inhibits signal transduction by increasing the GTPase activity of G protein alpha subunits, thereby driving them into their inactive GDP-bound form. The polypeptide is Regulator of G-protein signaling 1 (RGS1) (Equus caballus (Horse)).